Here is a 273-residue protein sequence, read N- to C-terminus: MSLQQTIEQAFENRNEYSPATMPQDVRDAINQVLEQLDNGTLRVAEKKDGEWVVNQWAKKAVLLSFRLNDNYVQAAGEHIQFYDKVPTKFADWTEAQFKEAGVRVVPPAVARKGSYIAPGAVLMPSYVNIGAYVDQGAMVDTWATVGSCAQIGKNVHLSGGVGIGGVLEPLQANPTIIEDNCFIGARSEIVEGVIVEEGAVISMGVYIGQSTRIYDRETGEIHRGRVPAGSVVVPGSLPSEDGTHSLYAAIIVKKVDAQTRAKTSVNELLRLA.

Residues arginine 104 and aspartate 141 each contribute to the substrate site.

It belongs to the transferase hexapeptide repeat family. As to quaternary structure, homotrimer.

The protein localises to the cytoplasm. It catalyses the reaction (S)-2,3,4,5-tetrahydrodipicolinate + succinyl-CoA + H2O = (S)-2-succinylamino-6-oxoheptanedioate + CoA. It functions in the pathway amino-acid biosynthesis; L-lysine biosynthesis via DAP pathway; LL-2,6-diaminopimelate from (S)-tetrahydrodipicolinate (succinylase route): step 1/3. This chain is 2,3,4,5-tetrahydropyridine-2,6-dicarboxylate N-succinyltransferase, found in Psychrobacter arcticus (strain DSM 17307 / VKM B-2377 / 273-4).